The sequence spans 624 residues: (-)-beta-phellandrene synthase 4, chloroplastic (624 aa).

Residues 1–48 (MAIVSSVPLASKSCLHKSLISSIHKLKPFCRTIPTLGMSRPGKSVMPS) constitute a chloroplast transit peptide. A disordered region spans residues 41 to 60 (PGKSVMPSMSMSSPVSDDGV). A compositionally biased stretch (low complexity) spans 44–56 (SVMPSMSMSSPVS). The Mg(2+) site is built by D375, D379, and D527. The DDXXD motif signature appears at 375-379 (DDMYD).

The protein belongs to the terpene synthase family. Tpsd subfamily. The cofactor is Mg(2+). It depends on Mn(2+) as a cofactor.

It is found in the plastid. The protein resides in the chloroplast. The catalysed reaction is (2E)-geranyl diphosphate = (-)-beta-phellandrene + diphosphate. It functions in the pathway terpene metabolism; oleoresin biosynthesis. In terms of biological role, terpene synthase (TPS) involved in the biosynthesis of monoterpene natural products included in conifer oleoresin secretions and volatile emissions; these compounds contribute to biotic and abiotic stress defense against herbivores and pathogens. Catalyzes the conversion of (2E)-geranyl diphosphate (GPP) to (-)-beta-phellandrene. The polypeptide is (-)-beta-phellandrene synthase 4, chloroplastic (Picea sitchensis (Sitka spruce)).